Here is a 474-residue protein sequence, read N- to C-terminus: Glutamate--tRNA ligase 1 (474 aa).

Residues 11–21 (PSPTGFLHIGG) carry the 'HIGH' region motif. Basic and acidic residues predominate over residues 113–133 (TARAEGRAPRYDGRWRDRDPS). Positions 113-136 (TARAEGRAPRYDGRWRDRDPSEAP) are disordered. A 'KMSKS' region motif is present at residues 240–244 (KLSKR). Lys-243 is an ATP binding site.

The protein belongs to the class-I aminoacyl-tRNA synthetase family. Glutamate--tRNA ligase type 1 subfamily. In terms of assembly, monomer.

The protein resides in the cytoplasm. It carries out the reaction tRNA(Glu) + L-glutamate + ATP = L-glutamyl-tRNA(Glu) + AMP + diphosphate. In terms of biological role, catalyzes the attachment of glutamate to tRNA(Glu) in a two-step reaction: glutamate is first activated by ATP to form Glu-AMP and then transferred to the acceptor end of tRNA(Glu). In Methylorubrum extorquens (strain PA1) (Methylobacterium extorquens), this protein is Glutamate--tRNA ligase 1.